We begin with the raw amino-acid sequence, 754 residues long: 5-methyltetrahydropteroyltriglutamate--homocysteine methyltransferase (754 aa).

Residues 15-18 (RELK) and Lys-114 contribute to the 5-methyltetrahydropteroyltri-L-glutamate site. L-homocysteine-binding positions include 430–432 (IGS) and Glu-483. Residues 430–432 (IGS) and Glu-483 each bind L-methionine. 5-methyltetrahydropteroyltri-L-glutamate-binding positions include 514–515 (RC) and Trp-560. Position 598 (Asp-598) interacts with L-homocysteine. An L-methionine-binding site is contributed by Asp-598. Glu-604 is a binding site for 5-methyltetrahydropteroyltri-L-glutamate. Residues His-641, Cys-643, and Glu-665 each coordinate Zn(2+). Residue His-694 is the Proton donor of the active site. Cys-726 contacts Zn(2+).

This sequence belongs to the vitamin-B12 independent methionine synthase family. Zn(2+) serves as cofactor.

The enzyme catalyses 5-methyltetrahydropteroyltri-L-glutamate + L-homocysteine = tetrahydropteroyltri-L-glutamate + L-methionine. The protein operates within amino-acid biosynthesis; L-methionine biosynthesis via de novo pathway; L-methionine from L-homocysteine (MetE route): step 1/1. In terms of biological role, catalyzes the transfer of a methyl group from 5-methyltetrahydrofolate to homocysteine resulting in methionine formation. In Campylobacter jejuni (strain RM1221), this protein is 5-methyltetrahydropteroyltriglutamate--homocysteine methyltransferase.